Here is a 513-residue protein sequence, read N- to C-terminus: MGARSESLVGVVLLFQLLADRLWCAATASDSLYDVSYSITAIKPRVDEMVSVDTHMYSHRWKRQSVDTNRPSVGQDFPDMFLEGTNENGTEIEEDTDHKYYTSRTYGPLDSASRDLWVNIDQMEKEKVKIHGILSNTHRQAARVNLSFDFPFYGHFLREITVATGGFIYTGEVVHRMLTATQYIAPLMANFDPSVSRNSTVRYFDNGTALVVQWDHVHLRDNYSLGSFTFQATLINDGRIVFGYKDIPVPVMQISSTNHPVKVGLSDAFVVVHKIQQIPNVRRRTIFEYHRVELEMTKITSFSAVEMLPLATCLQFNSCSSCVSSMIGFNCSWCNIPQRCSSGFDRHRQDWVENGCTEESKDTVCDDLLQTTGISHHTTTGLHATTSIYAFTTTTRMASHFPSNLPTEDDTKIALHLKDNGASTDNSAAEMKTGTLHTGLIIGILILVLLIITAILVAVYMYHHPTSSASLFLIERRPSRWPAMKFRRGSGHPAYAEVEPIGEKEGFIVSEQC.

The first 24 residues, 1–24, serve as a signal peptide directing secretion; the sequence is MGARSESLVGVVLLFQLLADRLWC. Residues 25–438 lie on the Extracellular side of the membrane; that stretch reads AATASDSLYD…AEMKTGTLHT (414 aa). N88, N145, N198, N206, N222, and N330 each carry an N-linked (GlcNAc...) asparagine glycan. Residues 312-357 form the PSI domain; that stretch reads TCLQFNSCSSCVSSMIGFNCSWCNIPQRCSSGFDRHRQDWVENGCT. The helical transmembrane segment at 439–459 threads the bilayer; that stretch reads GLIIGILILVLLIITAILVAV. The Cytoplasmic portion of the chain corresponds to 460–513; sequence YMYHHPTSSASLFLIERRPSRWPAMKFRRGSGHPAYAEVEPIGEKEGFIVSEQC.

This sequence belongs to the plexin family.

The protein localises to the membrane. This is Plexin domain-containing protein 2 (plxdc2) from Xenopus laevis (African clawed frog).